Here is a 331-residue protein sequence, read N- to C-terminus: Glycerol-3-phosphate dehydrogenase [NAD(P)+] (331 aa).

Residues Ser-11, Phe-12, Arg-32, and Lys-106 each coordinate NADPH. The sn-glycerol 3-phosphate site is built by Lys-106, Gly-134, and Ser-136. Ala-138 contributes to the NADPH binding site. Lys-189, Asp-242, Ser-252, Arg-253, and Asn-254 together coordinate sn-glycerol 3-phosphate. The active-site Proton acceptor is the Lys-189. Arg-253 serves as a coordination point for NADPH. NADPH contacts are provided by Val-277 and Glu-279.

The protein belongs to the NAD-dependent glycerol-3-phosphate dehydrogenase family.

The protein localises to the cytoplasm. The enzyme catalyses sn-glycerol 3-phosphate + NAD(+) = dihydroxyacetone phosphate + NADH + H(+). The catalysed reaction is sn-glycerol 3-phosphate + NADP(+) = dihydroxyacetone phosphate + NADPH + H(+). It functions in the pathway membrane lipid metabolism; glycerophospholipid metabolism. Its function is as follows. Catalyzes the reduction of the glycolytic intermediate dihydroxyacetone phosphate (DHAP) to sn-glycerol 3-phosphate (G3P), the key precursor for phospholipid synthesis. The protein is Glycerol-3-phosphate dehydrogenase [NAD(P)+] of Clostridium perfringens (strain ATCC 13124 / DSM 756 / JCM 1290 / NCIMB 6125 / NCTC 8237 / Type A).